A 376-amino-acid polypeptide reads, in one-letter code: WD repeat-containing protein 86 (376 aa).

WD repeat units follow at residues 13 to 52, 55 to 94, 95 to 132, 135 to 188, 191 to 232, 234 to 272, 274 to 310, and 313 to 350; these read DHRGGINWLSLSPDGQRLLTGSEDGTARLWSTADGQCCAL, GHESYVTFCQLEDEAAFTCSADCTIRRWDVLTGQCLQVYR, GHTSIVNRILVANNQLFSSSYDRTARVWSVDKGQMSRE, GHRN…CHQT, GHTG…RVFR, HRGSVICLELVNRLVYSGSADRTVKCWLADTGECVRTFT, HRRNVSALKYHAGTLFTGSGDACARAFDAQSGELRRV, and GHTFIINCIQVHGQVLYTASHDGALRLWDVRGLRGAPR.

The protein is WD repeat-containing protein 86 (WDR86) of Homo sapiens (Human).